A 707-amino-acid chain; its full sequence is Translation initiation factor eIF2B subunit epsilon (707 aa).

2 disordered regions span residues 489–526 (HDDI…SVKF) and 686–707 (AEEE…DESD). One can recognise a W2 domain in the interval 516 to 693 (DNPIEPDSVK…KSAEEESDDS (178 aa)). A compositionally biased stretch (acidic residues) spans 688–707 (EESDDSDDSDDDDDDSDESD).

Belongs to the eIF-2B gamma/epsilon subunits family. In terms of assembly, component of the translation initiation factor 2B (eIF2B) complex which is a heterodecamer of two sets of five different subunits: alpha, beta, gamma, delta and epsilon. Subunits alpha, beta and delta comprise a regulatory subcomplex and subunits epsilon and gamma comprise a catalytic subcomplex. Within the complex, the hexameric regulatory complex resides at the center, with the two heterodimeric catalytic subcomplexes bound on opposite sides.

It is found in the cytoplasm. It localises to the cytosol. Acts as a component of the translation initiation factor 2B (eIF2B) complex, which catalyzes the exchange of GDP for GTP on eukaryotic initiation factor 2 (eIF2) gamma subunit. Its guanine nucleotide exchange factor activity is repressed when bound to eIF2 complex phosphorylated on the alpha subunit, thereby limiting the amount of methionyl-initiator methionine tRNA available to the ribosome and consequently global translation is repressed. The sequence is that of Translation initiation factor eIF2B subunit epsilon (eif2b5) from Dictyostelium discoideum (Social amoeba).